A 249-amino-acid chain; its full sequence is Green-light absorbing proteorhodopsin (249 aa).

Residues 1–17 (MKLLLILGSVIALPTFA) form the signal peptide. A run of 7 helical transmembrane segments spans residues 30–49 (GVSFWLVTAALLASTVFFFV), 62–84 (LTVSGLVTGIAFWHYMYMRGVWI), 99–121 (LLTVPLLICEFYLILAAATNVAG), 128–147 (LVGSLVMLVFGYMGEAGIMA), 151–168 (AFIIGCLAWVYMIYELWA), 189–211 (MMYIIIFGWAIYPVGYFTGYLMG), and 221–243 (LIYNLADFVNKILFGLIIWNVAV). N6-(retinylidene)lysine is present on K231.

The protein belongs to the archaeal/bacterial/fungal opsin family. In terms of processing, contains one covalently linked retinal chromophore.

The protein resides in the cell membrane. Functionally, light-driven proton pump that generates photothrophic energy. The chain is Green-light absorbing proteorhodopsin from Gamma-proteobacterium EBAC31A08.